A 305-amino-acid chain; its full sequence is Tyrosine recombinase XerC (305 aa).

The Core-binding (CB) domain occupies 4–95; the sequence is TQIQELIIKW…AIKNFYKFLE (92 aa). The Tyr recombinase domain occupies 116 to 298; that stretch reads LLPKALSEEE…SIKHLETAYV (183 aa). Residues Arg-159, Lys-182, His-250, Arg-253, and His-276 contribute to the active site. The active-site O-(3'-phospho-DNA)-tyrosine intermediate is Tyr-285.

Belongs to the 'phage' integrase family. XerC subfamily. In terms of assembly, forms a cyclic heterotetrameric complex composed of two molecules of XerC and two molecules of XerD.

Its subcellular location is the cytoplasm. Site-specific tyrosine recombinase, which acts by catalyzing the cutting and rejoining of the recombining DNA molecules. The XerC-XerD complex is essential to convert dimers of the bacterial chromosome into monomers to permit their segregation at cell division. It also contributes to the segregational stability of plasmids. This is Tyrosine recombinase XerC from Rickettsia bellii (strain OSU 85-389).